We begin with the raw amino-acid sequence, 277 residues long: Caspase-3 (277 aa).

Residue Met-1 is modified to N-acetylmethionine. 2 consecutive propeptides follow at residues 1–9 (MENTENSVD) and 10–28 (SKSIKNLEPKIIHGSQSMD). A compositionally biased stretch (polar residues) spans 1 to 10 (MENTENSVDS). A disordered region spans residues 1–20 (MENTENSVDSKSIKNLEPKI). Lys-11 carries the post-translational modification N6-acetyllysine. Basic and acidic residues predominate over residues 11–20 (KSIKNLEPKI). Residue Ser-26 is modified to Phosphoserine. Active-site residues include His-121 and Cys-163. The residue at position 163 (Cys-163) is an S-nitrosocysteine; in inhibited form.

The protein belongs to the peptidase C14A family. As to quaternary structure, heterotetramer that consists of two anti-parallel arranged heterodimers, each one formed by a 17 kDa (p17) and a 12 kDa (p12) subunit. Interacts with BIRC6/bruce. Cleavage by granzyme B, caspase-6, caspase-8 and caspase-10 generates the two active subunits. Additional processing of the propeptides is likely due to the autocatalytic activity of the activated protease. Active heterodimers between the small subunit of caspase-7 protease and the large subunit of caspase-3 also occur and vice versa. In terms of processing, S-nitrosylated on its catalytic site cysteine in unstimulated cell lines and denitrosylated upon activation of the Fas apoptotic pathway, associated with an increase in intracellular caspase activity. Fas therefore activates caspase-3 not only by inducing the cleavage of the caspase zymogen to its active subunits, but also by stimulating the denitrosylation of its active site thiol. Post-translationally, ubiquitinated by BIRC6; this activity is inhibited by DIABLO/SMAC.

The protein localises to the cytoplasm. The catalysed reaction is Strict requirement for an Asp residue at positions P1 and P4. It has a preferred cleavage sequence of Asp-Xaa-Xaa-Asp-|- with a hydrophobic amino-acid residue at P2 and a hydrophilic amino-acid residue at P3, although Val or Ala are also accepted at this position.. Inhibited by BIRC6; following inhibition of BIRC6-caspase binding by DIABLO/SMAC, BIRC6 is subjected to caspase cleavage, leading to an increase in active caspases. Involved in the activation cascade of caspases responsible for apoptosis execution. At the onset of apoptosis, it proteolytically cleaves poly(ADP-ribose) polymerase PARP1 at a '216-Asp-|-Gly-217' bond. Cleaves and activates sterol regulatory element binding proteins (SREBPs) between the basic helix-loop-helix leucine zipper domain and the membrane attachment domain. Cleaves and activates caspase-6, -7 and -9 (CASP6, CASP7 and CASP9, respectively). Cleaves and inactivates interleukin-18 (IL18). Triggers cell adhesion in sympathetic neurons through RET cleavage. Cleaves IL-1 beta between an Asp and an Ala, releasing the mature cytokine which is involved in a variety of inflammatory processes. Cleaves and inhibits serine/threonine-protein kinase AKT1 in response to oxidative stress. Acts as an inhibitor of type I interferon production during virus-induced apoptosis by mediating cleavage of antiviral proteins CGAS, IRF3 and MAVS, thereby preventing cytokine overproduction. Also involved in pyroptosis by mediating cleavage and activation of gasdermin-E (GSDME). Cleaves XRCC4 and phospholipid scramblase proteins XKR4, XKR8 and XKR9, leading to promote phosphatidylserine exposure on apoptotic cell surface. Cleaves BIRC6 following inhibition of BIRC6-caspase binding by DIABLO/SMAC. The sequence is that of Caspase-3 (CASP3) from Pan troglodytes (Chimpanzee).